Here is a 300-residue protein sequence, read N- to C-terminus: Protein ARMCX6 (300 aa).

At 1-6 the chain is on the mitochondrial intermembrane side; the sequence is MGRARE. Mitochondrion outer membrane (MOM)-targeting sequence regions lie at residues 1–6 and 26–36; these read MGRARE and KLTIGRDDSEK. A helical; Signal-anchor membrane pass occupies residues 7–27; that stretch reads VGWMAAGLMIGAGACYCVYKL. The Cytoplasmic segment spans residues 28 to 300; it reads TIGRDDSEKL…REILLETPAP (273 aa). Disordered stretches follow at residues 35 to 54 and 69 to 99; these read EKLE…LDEE and WTED…RAHP.

The protein belongs to the eutherian X-chromosome-specific Armcx family.

It localises to the mitochondrion. The protein localises to the mitochondrion outer membrane. Its function is as follows. May regulate the dynamics and distribution of mitochondria in neural cells. This chain is Protein ARMCX6 (ARMCX6), found in Homo sapiens (Human).